The primary structure comprises 173 residues: Photosystem I assembly protein Ycf3 (173 aa).

3 TPR repeats span residues 35 to 68, 72 to 105, and 120 to 153; these read AFAYYRDGMSAQADGEYSEALENYEEALRLEDDP, SYILYNMGLIYASNGDHHKALELYHEAIDLNPRM, and GEKAKQSGNEDESEALFDKAAEYWKQAIRIAPNN.

Belongs to the Ycf3 family.

Its subcellular location is the cellular thylakoid membrane. Essential for the assembly of the photosystem I (PSI) complex. May act as a chaperone-like factor to guide the assembly of the PSI subunits. The sequence is that of Photosystem I assembly protein Ycf3 from Picosynechococcus sp. (strain ATCC 27264 / PCC 7002 / PR-6) (Agmenellum quadruplicatum).